The primary structure comprises 350 residues: MASFPELSERAQQLLKALVERYIGEGQPVGSRVLARDAGLSPATIRNVMADLEELGLITSPHTSAGRLPTVSGYRLFVDSLLTVKPLHQAIVDQLWLDLESRENPRDLLETASKLLSELTHMACIISMPRRETLVFQHIEFLPLSDNRVLAILVTSDQEIHNKIIHTPHKFSAAELQTAANFFNAVCGGKDMVSAREHLRAELAKERDRLSEQLLQAGEIAEQALAEGGRSRKPFLVRGETNLMDFVELADVDRLRGLFEAFRQKESIVGLLDRCLESPGVKIIIGEESGFRPLEPCSLVTASYSVDNRVMGVLGVIGPTRMKYERVIPLVDVTAKLVGAALNQRTLAPT.

The protein belongs to the HrcA family.

Functionally, negative regulator of class I heat shock genes (grpE-dnaK-dnaJ and groELS operons). Prevents heat-shock induction of these operons. The polypeptide is Heat-inducible transcription repressor HrcA (Methylococcus capsulatus (strain ATCC 33009 / NCIMB 11132 / Bath)).